We begin with the raw amino-acid sequence, 173 residues long: Lipoprotein signal peptidase (173 aa).

The next 4 helical transmembrane spans lie at 7-27 (FFWFTALLSLLLDHLTKLWVV), 41-61 (LWPGVFHLTYVTNTGAAFSLF), 70-90 (WLSLGVSVGLMALAILGPNFN), and 95-115 (AGYGFLLGGAAGNGIDRFVAG). Catalysis depends on residues Asp119 and Asp135. Residues 130–150 (IFNLADVFINIGIICLLIAAW) traverse the membrane as a helical segment.

The protein belongs to the peptidase A8 family.

Its subcellular location is the cell inner membrane. It catalyses the reaction Release of signal peptides from bacterial membrane prolipoproteins. Hydrolyzes -Xaa-Yaa-Zaa-|-(S,diacylglyceryl)Cys-, in which Xaa is hydrophobic (preferably Leu), and Yaa (Ala or Ser) and Zaa (Gly or Ala) have small, neutral side chains.. It functions in the pathway protein modification; lipoprotein biosynthesis (signal peptide cleavage). This protein specifically catalyzes the removal of signal peptides from prolipoproteins. This Cyanothece sp. (strain PCC 7425 / ATCC 29141) protein is Lipoprotein signal peptidase.